The following is a 277-amino-acid chain: 3-methyl-2-oxobutanoate hydroxymethyltransferase (277 aa).

Asp-53 and Asp-96 together coordinate Mg(2+). 3-methyl-2-oxobutanoate is bound by residues 53–54, Asp-96, and Lys-126; that span reads DS. Glu-128 provides a ligand contact to Mg(2+). Residue Glu-195 is the Proton acceptor of the active site.

The protein belongs to the PanB family. In terms of assembly, homodecamer; pentamer of dimers. Mg(2+) serves as cofactor.

The protein localises to the cytoplasm. It catalyses the reaction 3-methyl-2-oxobutanoate + (6R)-5,10-methylene-5,6,7,8-tetrahydrofolate + H2O = 2-dehydropantoate + (6S)-5,6,7,8-tetrahydrofolate. It participates in cofactor biosynthesis; (R)-pantothenate biosynthesis; (R)-pantoate from 3-methyl-2-oxobutanoate: step 1/2. In terms of biological role, catalyzes the reversible reaction in which hydroxymethyl group from 5,10-methylenetetrahydrofolate is transferred onto alpha-ketoisovalerate to form ketopantoate. The chain is 3-methyl-2-oxobutanoate hydroxymethyltransferase from Chlorobium luteolum (strain DSM 273 / BCRC 81028 / 2530) (Pelodictyon luteolum).